The sequence spans 332 residues: DPFQCLAVCINLSEAVRSSSPETSVSHIPVHQDGSCNGLQHYAALGRDKLGAAAVNLVAGEKPADVYSGIAARVLDIMKRDAQRDPAEFPDAVRARVLVNQVDRKLVKQTVMTSVYGVTYIGARDQIKRRLKERGAIADDSELFGAACYAAKVTLTALGEMFEAARSIMTWLGECAKIIASENEPVRWTTPLGLPVVQPYRKIGRHLIKTSLQILTLQRETEKVMVKRQRTAFPPNFIHSLDGSHMMMTAVACRRAGLNFAGVHDSYWTHACDVDKLNRILREKFVELYEAPILEKLLESFQTSYPTLLFPPLPERGDFDMRDVLESPYFFN.

Residues aspartate 33, lysine 108, and aspartate 265 contribute to the active site.

The protein belongs to the phage and mitochondrial RNA polymerase family.

The enzyme catalyses RNA(n) + a ribonucleoside 5'-triphosphate = RNA(n+1) + diphosphate. DNA-dependent RNA polymerase catalyzes the transcription of DNA into RNA using the four ribonucleoside triphosphates as substrates. This is DNA-directed RNA polymerase 2A (RPOT2-SYL) from Nicotiana tabacum (Common tobacco).